The chain runs to 175 residues: Cytochrome c-type biogenesis protein CcmE (175 aa).

Residues 1–8 (MNAVRRKK) lie on the Cytoplasmic side of the membrane. A helical; Signal-anchor for type II membrane protein membrane pass occupies residues 9–29 (LIWVAATLAGAIIAVLLVIYA). The Periplasmic portion of the chain corresponds to 30–175 (IGQQTDYYFD…GNHTTSTLQE (146 aa)). The heme site is built by His-124 and Tyr-128. The segment at 142–175 (AAKGVTPTSEQFSPAIPVKQTAGEGNHTTSTLQE) is disordered.

Belongs to the CcmE/CycJ family.

Its subcellular location is the cell inner membrane. In terms of biological role, heme chaperone required for the biogenesis of c-type cytochromes. Transiently binds heme delivered by CcmC and transfers the heme to apo-cytochromes in a process facilitated by CcmF and CcmH. The polypeptide is Cytochrome c-type biogenesis protein CcmE (Psychrobacter sp. (strain PRwf-1)).